The following is a 514-amino-acid chain: Uronyl 2-sulfotransferase homolog pip (514 aa).

At 1-30 (MSLNAERSYKMKLRDVENAFKYRRIPYPKR) the chain is on the cytoplasmic side. Residues 31 to 50 (SVELIALLAISCTFFLFMHT) form a helical; Signal-anchor for type II membrane protein membrane-spanning segment. Residues 51–514 (NKLNSRLKEM…EQQNEYNEDY (464 aa)) lie on the Lumenal side of the membrane. Basic and acidic residues predominate over residues 112-121 (HDRRSSEEQL). A disordered region spans residues 112–185 (HDRRSSEEQL…DEDEVEENDD (74 aa)). The segment covering 127 to 140 (HGHHHDHHSHHHHM) has biased composition (basic residues). A compositionally biased stretch (basic and acidic residues) spans 155–170 (HDKQLAVPDNKHKEDE). Residues 171–185 (VHYEDDEDEVEENDD) show a composition bias toward acidic residues. N-linked (GlcNAc...) asparagine glycosylation occurs at Asn-207. His-282 is a catalytic residue. Residues Asn-287, Asn-416, Asn-451, and Asn-467 are each glycosylated (N-linked (GlcNAc...) asparagine).

Belongs to the sulfotransferase 3 family. Interacts with wbl/windbeutel; the interaction is direct and does not require pip to be folded. In terms of tissue distribution, ovary-specific. Specifically expressed in the ventral follicle cells of stage 9-10 egg chambers. Expressed in ovaries. Specifically expressed in the ventral follicle cells of stage 9-10 egg chambers.

Its subcellular location is the golgi apparatus membrane. Its function is as follows. Sulfotransferase involved in dorsoventral axis patterning in early embryos. Required for the ventral activation of ea/easter by the protease snk in the perivitelline space between the embryonic membrane and the eggshell; activation of ea requires both activation of the ndl-gd-snk protease cascade and sulfation of a vitelline membrane component by pip. Probably acts by mediating the sulfation of some glycoprotein or glycosaminoglycan stably deposited in the vitelline membrane, whose ventrally localized modification leads to spatially restricted activation of the protease cascade resulting in localized activation of the spz Toll receptor ligand by ea. In terms of biological role, probably required redundantly with isoform H for dorsoventral axis patterning in embryos. Lacks 2-O-sulfotransferase activity towards completely desulfated N-sulfated (CDSNS) heparin, chondroitin, and chondroitin sulfate A, B (dermatan sulfate), and C. Sulfates several components of the eggshell vitelline membrane, including Vml, Vm26Aa, Vm32E and psd/palisade/Fcp26Aa. Probably required redundantly with isoform A for dorsoventral axis patterning in embryos. Functionally, lacks 2-O-sulfotransferase activity towards CDSNS heparin, chondroitin, and chondroitin sulfate A, B (dermatan sulfate), and C. This chain is Uronyl 2-sulfotransferase homolog pip, found in Drosophila melanogaster (Fruit fly).